Reading from the N-terminus, the 137-residue chain is 2-iminobutanoate/2-iminopropanoate deaminase (137 aa).

Residue Ser2 is modified to N-acetylserine. N6-succinyllysine occurs at positions 13 and 67. Thr74 is subject to Phosphothreonine. A Phosphoserine modification is found at Ser136.

In terms of assembly, homotrimer. Interacts with YTHDF2. Expressed by various malignant neoplasms.

Its subcellular location is the cytoplasm. It is found in the nucleus. It localises to the peroxisome. The protein resides in the mitochondrion. It catalyses the reaction 2-iminobutanoate + H2O = 2-oxobutanoate + NH4(+). It carries out the reaction 2-iminopropanoate + H2O = pyruvate + NH4(+). Its function is as follows. Catalyzes the hydrolytic deamination of enamine/imine intermediates that form during the course of normal metabolism. May facilitate the release of ammonia from these potentially toxic reactive metabolites, reducing their impact on cellular components. It may act on enamine/imine intermediates formed by several types of pyridoxal-5'-phosphate-dependent dehydratases including L-threonine dehydratase. In terms of biological role, also promotes endoribonucleolytic cleavage of some transcripts by promoting recruitment of the ribonuclease P/MRP complex. Acts by bridging YTHDF2 and the ribonuclease P/MRP complex. RIDA/HRSP12 binds to N6-methyladenosine (m6A)-containing mRNAs containing a 5'-GGUUC-3' motif: cooperative binding of RIDA/HRSP12 and YTHDF2 to such transcripts lead to recruitment of the ribonuclease P/MRP complex and subsequent endoribonucleolytic cleavage. This is 2-iminobutanoate/2-iminopropanoate deaminase from Capra hircus (Goat).